The sequence spans 760 residues: Forkhead box protein M1 (760 aa).

Disordered stretches follow at residues 1–54 and 95–167; these read MRTS…AESS and GKES…SYAG. 2 stretches are compositionally biased toward low complexity: residues 43–54 and 110–124; these read PAQASQEVAESS and SSGGPSSHPSQPQAH. The segment covering 125–134 has biased composition (basic and acidic residues); that stretch reads SSRDSKRAEV. A compositionally biased stretch (low complexity) spans 140–149; it reads GPKPAAKGVP. Glycyl lysine isopeptide (Lys-Gly) (interchain with G-Cter in SUMO2) cross-links involve residues Lys-199 and Lys-323. The fork-head DNA-binding region spans 233–325; the sequence is ERPPYSYMAM…LTLDQVFKPL (93 aa). A disordered region spans residues 323 to 348; that stretch reads KPLEPGSPQSPEHLESQQKRPNPELH. Ser-329 carries the post-translational modification Phosphoserine. Over residues 334 to 348 the composition is skewed to basic and acidic residues; sequence EHLESQQKRPNPELH. Lys-354 participates in a covalent cross-link: Glycyl lysine isopeptide (Lys-Gly) (interchain with G-Cter in SUMO2). A Phosphoserine; by CHEK2 modification is found at Ser-374. Residues Lys-420 and Lys-438 each participate in a glycyl lysine isopeptide (Lys-Gly) (interchain with G-Cter in SUMO2) cross-link. 3 disordered regions span residues 500-560, 577-635, and 660-709; these read SWED…PDLF, ESSE…LDFS, and PLKS…IPSL. Ser-521 carries the phosphoserine modification. Residues 531 to 542 show a composition bias toward basic and acidic residues; it reads VTKRREKREVSR. The segment covering 604-613 has biased composition (polar residues); sequence PVSSTPSKSV. Thr-608 is modified (phosphothreonine; by CDK1). The residue at position 624 (Thr-624) is a Phosphothreonine. A phosphoserine; by PLK1 mark is found at Ser-727 and Ser-736.

In terms of processing, phosphorylated in M (mitotic) phase. Phosphorylation by the checkpoint kinase CHEK2 in response to DNA damage increases the FOXM1 protein stability probably stimulating the transcription of genes involved in DNA repair. Phosphorylated by CDK1 in late S and G2 phases, creating docking sites for the POLO box domains of PLK1. Subsequently, PLK1 binds and phosphorylates FOXM1, leading to activation of transcriptional activity and subsequent enhanced expression of key mitotic regulators. Phosphorylated by GSK3B leading to ubiquitination and proteasomal degradation. As to expression, expressed in fetal heart, brain, liver, lung, kidney and limb, but only in adult thymus. Appears to be expressed only in adult organs containing proliferating/cycling cells or in response to growth factors.

Its subcellular location is the nucleus. In terms of biological role, transcription factor regulating the expression of cell cycle genes essential for DNA replication and mitosis. Plays a role in the control of cell proliferation. Also plays a role in DNA break repair, participating in the DNA damage checkpoint response. Promotes transcription of PHB2. This is Forkhead box protein M1 (Foxm1) from Mus musculus (Mouse).